The following is a 284-amino-acid chain: tRNA uridine(34) hydroxylase (284 aa).

A Rhodanese domain is found at 132 to 226 (AGRPVVMLDT…YFEEVGGAHY (95 aa)). Cys-186 acts as the Cysteine persulfide intermediate in catalysis.

The protein belongs to the TrhO family.

The catalysed reaction is uridine(34) in tRNA + AH2 + O2 = 5-hydroxyuridine(34) in tRNA + A + H2O. In terms of biological role, catalyzes oxygen-dependent 5-hydroxyuridine (ho5U) modification at position 34 in tRNAs. In Burkholderia orbicola (strain MC0-3), this protein is tRNA uridine(34) hydroxylase.